An 824-amino-acid chain; its full sequence is AMP deaminase 2 (824 aa).

Residues 1 to 43 (MASYPGPGKSKAKYPFKKRASLQASAAAPEARSGLGASPLQSA) form a disordered region. A compositionally biased stretch (basic residues) spans 10 to 20 (SKAKYPFKKRA). At Ser21 the chain carries Phosphoserine. Low complexity predominate over residues 21–33 (SLQASAAAPEARS). Position 44 is an omega-N-methylarginine (Arg44). Phosphoserine is present on residues Ser45, Ser63, and Ser79. Phosphotyrosine is present on Tyr90. Phosphoserine is present on residues Ser96 and Ser113. Thr133 is modified (phosphothreonine). Ser135 and Ser137 each carry phosphoserine. His364 and His366 together coordinate Zn(2+). Residues His366 and 435-440 (KFNAKY) each bind substrate. Position 633 (His633) interacts with Zn(2+). Position 636 (Glu636) interacts with substrate. Catalysis depends on His655, which acts as the Proton acceptor. Residue Asp710 participates in Zn(2+) binding. Substrate is bound at residue 711–714 (DPLQ).

The protein belongs to the metallo-dependent hydrolases superfamily. Adenosine and AMP deaminases family. Homotetramer. Requires Zn(2+) as cofactor.

The enzyme catalyses AMP + H2O + H(+) = IMP + NH4(+). The protein operates within purine metabolism; IMP biosynthesis via salvage pathway; IMP from AMP: step 1/1. AMP deaminase plays a critical role in energy metabolism. Catalyzes the deamination of AMP to IMP and plays an important role in the purine nucleotide cycle. The chain is AMP deaminase 2 from Rattus norvegicus (Rat).